The following is a 178-amino-acid chain: ADP-ribosylation factor-like protein 5 (178 aa).

A lipid anchor (N-myristoyl glycine) is attached at Gly-2. GTP-binding positions include 24–31, 67–71, and 126–129; these read GLDNAGKT, DIGGQ, and NKQD.

The protein belongs to the small GTPase superfamily. Arf family.

The protein localises to the golgi apparatus. Its function is as follows. GTP-binding protein that may be involved in protein trafficking; may modulate vesicle budding and uncoating within the Golgi apparatus. Plays a role in the shedding of pathogen spores from intestinal cells. The chain is ADP-ribosylation factor-like protein 5 (arl-5) from Caenorhabditis elegans.